Consider the following 262-residue polypeptide: Type III pantothenate kinase (262 aa).

9-16 is a binding site for ATP; sequence DAGNSRIK. Residues Y96 and 103 to 106 contribute to the substrate site; that span reads GSDR. The Proton acceptor role is filled by D105. An ATP-binding site is contributed by T129. T189 contributes to the substrate binding site.

The protein belongs to the type III pantothenate kinase family. In terms of assembly, homodimer. The cofactor is NH4(+). K(+) is required as a cofactor.

Its subcellular location is the cytoplasm. The catalysed reaction is (R)-pantothenate + ATP = (R)-4'-phosphopantothenate + ADP + H(+). The protein operates within cofactor biosynthesis; coenzyme A biosynthesis; CoA from (R)-pantothenate: step 1/5. Its function is as follows. Catalyzes the phosphorylation of pantothenate (Pan), the first step in CoA biosynthesis. This is Type III pantothenate kinase from Burkholderia multivorans (strain ATCC 17616 / 249).